Consider the following 164-residue polypeptide: Photosystem II extrinsic protein V (164 aa).

The first 27 residues, 1 to 27, serve as a signal peptide directing secretion; that stretch reads MIPNRKIQLSLFAVIIVFETLLNQVYA. Residues cysteine 64, cysteine 67, histidine 68, and methionine 131 each contribute to the heme c site.

The protein belongs to the cytochrome c family. PsbV subfamily. As to quaternary structure, PSII is composed of 1 copy each of membrane proteins PsbA, PsbB, PsbC, PsbD, PsbE, PsbF, PsbH, PsbI, PsbJ, PsbK, PsbL, PsbM, PsbT, PsbY, PsbZ, Psb30/Ycf12, at least 3 peripheral proteins of the oxygen-evolving complex and a large number of cofactors. It forms dimeric complexes. The extrinsic subunits in red algae are PsbO (OEC33), PsbQ', cytochrome c-550 and PsbU. Heme c serves as cofactor.

The protein resides in the plastid. It localises to the chloroplast thylakoid membrane. In terms of biological role, one of the extrinsic, lumenal subunits of photosystem II (PSII). PSII is a light-driven water plastoquinone oxidoreductase, using light energy to abstract electrons from H(2)O, generating a proton gradient subsequently used for ATP formation. The extrinsic proteins stabilize the structure of photosystem II oxygen-evolving complex (OEC), the ion environment of oxygen evolution and protect the OEC against heat-induced inactivation. The sequence is that of Photosystem II extrinsic protein V from Gracilaria tenuistipitata var. liui (Red alga).